The sequence spans 54 residues: Glutathione S-transferase 6.7 (54 aa).

It belongs to the GST superfamily. Theta family. As to quaternary structure, homodimer. Post-translationally, the N-terminus is blocked.

It is found in the cytoplasm. The enzyme catalyses RX + glutathione = an S-substituted glutathione + a halide anion + H(+). Its function is as follows. Conjugation of reduced glutathione to a wide number of exogenous and endogenous hydrophobic electrophiles. The sequence is that of Glutathione S-transferase 6.7 from Dicentrarchus labrax (European seabass).